The following is a 119-amino-acid chain: DNA-binding protein MmarC7_1157 (119 aa).

Basic and acidic residues predominate over residues 1-12; sequence MNPEEIRQRRLQ. Residues 1–37 form a disordered region; that stretch reads MNPEEIRQRRLQEMQAKAQEQGAANDPEAQRQAQEQQ.

This sequence belongs to the PDCD5 family.

The protein is DNA-binding protein MmarC7_1157 of Methanococcus maripaludis (strain C7 / ATCC BAA-1331).